The following is a 428-amino-acid chain: UDP-N-acetylglucosamine 1-carboxyvinyltransferase 2 (428 aa).

22–23 provides a ligand contact to phosphoenolpyruvate; sequence KN. Arg92 provides a ligand contact to UDP-N-acetyl-alpha-D-glucosamine. Cys116 serves as the catalytic Proton donor. Cys116 carries the 2-(S-cysteinyl)pyruvic acid O-phosphothioketal modification. UDP-N-acetyl-alpha-D-glucosamine is bound by residues 121–125, Asp304, and Ile326; that span reads RPIDQ.

The protein belongs to the EPSP synthase family. MurA subfamily.

The protein resides in the cytoplasm. It carries out the reaction phosphoenolpyruvate + UDP-N-acetyl-alpha-D-glucosamine = UDP-N-acetyl-3-O-(1-carboxyvinyl)-alpha-D-glucosamine + phosphate. It participates in cell wall biogenesis; peptidoglycan biosynthesis. Functionally, cell wall formation. Adds enolpyruvyl to UDP-N-acetylglucosamine. This Geobacillus kaustophilus (strain HTA426) protein is UDP-N-acetylglucosamine 1-carboxyvinyltransferase 2.